Reading from the N-terminus, the 529-residue chain is Glycylpeptide N-tetradecanoyltransferase (529 aa).

Residues 1–10 (MSEQEGNQSE) show a composition bias toward polar residues. The tract at residues 1–65 (MSEQEGNQSE…ANPATKLTPS (65 aa)) is disordered. A compositionally biased stretch (basic and acidic residues) spans 11-23 (HQSEHVGESEGKL). Residues 26-40 (ETPTTSQSTNASTGT) show a composition bias toward polar residues. Tetradecanoyl-CoA-binding positions include 118–121 (FKFW), 252–254 (LCV), and 260–264 (SKRLT). The active-site Proton acceptor; via carboxylate is the V529.

Belongs to the NMT family. In terms of assembly, monomer.

The protein resides in the cytoplasm. The enzyme catalyses N-terminal glycyl-[protein] + tetradecanoyl-CoA = N-tetradecanoylglycyl-[protein] + CoA + H(+). Functionally, adds a myristoyl group to the N-terminal glycine residue of certain cellular proteins. The polypeptide is Glycylpeptide N-tetradecanoyltransferase (Ajellomyces capsulatus (Darling's disease fungus)).